Consider the following 206-residue polypeptide: Small ribosomal subunit protein uS4 (206 aa).

The tract at residues 18–45 is disordered; the sequence is NIWGRPKSPVNRREYGPGQHGQRRKGKM. The S4 RNA-binding domain maps to 94–157; that stretch reads RRLDAVVYRA…KQLASVLEAV (64 aa).

The protein belongs to the universal ribosomal protein uS4 family. In terms of assembly, part of the 30S ribosomal subunit. Contacts protein S5. The interaction surface between S4 and S5 is involved in control of translational fidelity.

In terms of biological role, one of the primary rRNA binding proteins, it binds directly to 16S rRNA where it nucleates assembly of the body of the 30S subunit. With S5 and S12 plays an important role in translational accuracy. The protein is Small ribosomal subunit protein uS4 of Ruegeria pomeroyi (strain ATCC 700808 / DSM 15171 / DSS-3) (Silicibacter pomeroyi).